A 202-amino-acid polypeptide reads, in one-letter code: 3-isopropylmalate dehydratase small subunit (202 aa).

It belongs to the LeuD family. LeuD type 1 subfamily. In terms of assembly, heterodimer of LeuC and LeuD.

It catalyses the reaction (2R,3S)-3-isopropylmalate = (2S)-2-isopropylmalate. It functions in the pathway amino-acid biosynthesis; L-leucine biosynthesis; L-leucine from 3-methyl-2-oxobutanoate: step 2/4. Its function is as follows. Catalyzes the isomerization between 2-isopropylmalate and 3-isopropylmalate, via the formation of 2-isopropylmaleate. In Rhizobium rhizogenes (strain K84 / ATCC BAA-868) (Agrobacterium radiobacter), this protein is 3-isopropylmalate dehydratase small subunit.